Consider the following 91-residue polypeptide: MKRVSMIVSGQVQGVGFRYYVQDIAEDMRITGWVRNLPDGTVEIDAEGKTDVLETFIRTISNTRQGAIQVRNVHVQEKEVCGYSIFTIRRD.

In terms of domain architecture, Acylphosphatase-like spans 3 to 90 (RVSMIVSGQV…CGYSIFTIRR (88 aa)). Residues arginine 18 and asparagine 36 contribute to the active site.

This sequence belongs to the acylphosphatase family.

The catalysed reaction is an acyl phosphate + H2O = a carboxylate + phosphate + H(+). The chain is Acylphosphatase (acyP) from Methanospirillum hungatei JF-1 (strain ATCC 27890 / DSM 864 / NBRC 100397 / JF-1).